A 262-amino-acid chain; its full sequence is Acidic leucine-rich nuclear phosphoprotein 32 family member B (262 aa).

4 LRR repeats span residues 16–40 (PGEV…LSSD), 43–64 (NLEF…PKLN), 65–87 (KLRK…AERT), and 89–110 (NLTH…EPLK). In terms of domain architecture, LRRCT spans 123–161 (CEVTMLINYRESVFTLLPQLTYLDGFDADEQEAPDSDPE). The segment covering 150-233 (ADEQEAPDSD…EDEEDDEADD (84 aa)) has biased composition (acidic residues). Residues 150–262 (ADEQEAPDSD…PEDEEDDEDD (113 aa)) are disordered. Residues 240-243 (KRKR) carry the Nuclear localization signal motif. The span at 247-262 (DEGEEDPEDEEDDEDD) shows a compositional bias: acidic residues.

This sequence belongs to the ANP32 family. Interacts with histones H3 and H4. Interacts with KLF5; this interaction induces promoter region-specific histone incorporation and inhibition of histone acetylation by ANP32B. Directly cleaved by caspase-3/CASP3.

Its subcellular location is the nucleus. Functionally, multifunctional protein that is involved in the regulation of many processes including cell proliferation, apoptosis, cell cycle progression or transcription. Regulates the proliferation of neuronal stem cells, differentiation of leukemic cells and progression from G1 to S phase of the cell cycle. As negative regulator of caspase-3-dependent apoptosis, may act as an antagonist of ANP32A in regulating tissue homeostasis. Exhibits histone chaperone properties, able to recruit histones to certain promoters, thus regulating the transcription of specific genes. Also plays an essential role in the nucleocytoplasmic transport of specific mRNAs via the uncommon nuclear mRNA export receptor XPO1/CRM1. This chain is Acidic leucine-rich nuclear phosphoprotein 32 family member B (ANP32B), found in Gallus gallus (Chicken).